The primary structure comprises 132 residues: Small ribosomal subunit protein uS8 (132 aa).

The protein belongs to the universal ribosomal protein uS8 family. Part of the 30S ribosomal subunit. Contacts proteins S5 and S12.

One of the primary rRNA binding proteins, it binds directly to 16S rRNA central domain where it helps coordinate assembly of the platform of the 30S subunit. This Renibacterium salmoninarum (strain ATCC 33209 / DSM 20767 / JCM 11484 / NBRC 15589 / NCIMB 2235) protein is Small ribosomal subunit protein uS8.